We begin with the raw amino-acid sequence, 445 residues long: Histidinol dehydrogenase (445 aa).

The NAD(+) site is built by Tyr-138, Gln-199, and Asn-222. 3 residues coordinate substrate: Ser-245, Gln-267, and His-270. Gln-267 and His-270 together coordinate Zn(2+). Catalysis depends on proton acceptor residues Glu-335 and His-336. His-336, Asp-369, Glu-423, and His-428 together coordinate substrate. Zn(2+) is bound at residue Asp-369. His-428 lines the Zn(2+) pocket.

The protein belongs to the histidinol dehydrogenase family. Requires Zn(2+) as cofactor.

It carries out the reaction L-histidinol + 2 NAD(+) + H2O = L-histidine + 2 NADH + 3 H(+). It functions in the pathway amino-acid biosynthesis; L-histidine biosynthesis; L-histidine from 5-phospho-alpha-D-ribose 1-diphosphate: step 9/9. Its function is as follows. Catalyzes the sequential NAD-dependent oxidations of L-histidinol to L-histidinaldehyde and then to L-histidine. This is Histidinol dehydrogenase from Burkholderia pseudomallei (strain 1710b).